A 391-amino-acid chain; its full sequence is Ethanol acetyltransferase 1 (391 aa).

The transit peptide at 1-24 (MFFTKVLNNQVANGLKQLPVHKRV) directs the protein to the mitochondrion. The AB hydrolase-1 domain occupies 48–154 (PIVFVHGIFG…DNSPIEQPHI (107 aa)). Catalysis depends on charge relay system residues S121, D145, and H295.

It belongs to the AB hydrolase superfamily.

Its subcellular location is the mitochondrion. It catalyses the reaction ethanol + acetyl-CoA = ethyl acetate + CoA. It carries out the reaction acetyl-CoA + H2O = acetate + CoA + H(+). The catalysed reaction is ethyl acetate + H2O = ethanol + acetate + H(+). With respect to regulation, by ethanol. Thioesterase and esterase reactions are highly repressed in the presence of high ethanol concentrations. Alcohol acetyltransferase that catalyzes the synthesis of ethyl acetate from ethanol and acetyl-CoA. Can also function as a thioesterase by hydrolyzing acetyl-CoA in the absence of ethanol, as well as esterase hydrolyzing ethyl acetate. This chain is Ethanol acetyltransferase 1 (EAT1), found in Wickerhamomyces anomalus (strain ATCC 58044 / CBS 1984 / NCYC 433 / NRRL Y-366-8) (Yeast).